A 434-amino-acid chain; its full sequence is Trigger factor (434 aa).

The region spanning 160–245 (GDKVKMNFVG…LTEVLAANLP (86 aa)) is the PPIase FKBP-type domain.

Belongs to the FKBP-type PPIase family. Tig subfamily.

It localises to the cytoplasm. It carries out the reaction [protein]-peptidylproline (omega=180) = [protein]-peptidylproline (omega=0). Functionally, involved in protein export. Acts as a chaperone by maintaining the newly synthesized protein in an open conformation. Functions as a peptidyl-prolyl cis-trans isomerase. The polypeptide is Trigger factor (Shewanella sp. (strain MR-4)).